A 100-amino-acid chain; its full sequence is Small ribosomal subunit protein uS14 (100 aa).

The protein belongs to the universal ribosomal protein uS14 family. Part of the 30S ribosomal subunit. Contacts proteins S3 and S10.

In terms of biological role, binds 16S rRNA, required for the assembly of 30S particles and may also be responsible for determining the conformation of the 16S rRNA at the A site. The chain is Small ribosomal subunit protein uS14 from Picosynechococcus sp. (strain ATCC 27264 / PCC 7002 / PR-6) (Agmenellum quadruplicatum).